Here is a 147-residue protein sequence, read N- to C-terminus: Hemoglobin subunit gamma-2 (147 aa).

The Globin domain occupies 3 to 147 (NFTAEDKAAI…VASALGSRYH (145 aa)). Thr13 is modified (phosphothreonine). 3 positions are modified to phosphoserine: Ser45, Ser51, and Ser53. Lys60 bears the N6-acetyllysine mark. A heme b-binding site is contributed by His64. Residue Lys83 is modified to N6-acetyllysine. His93 serves as a coordination point for heme b. Cys94 carries the S-nitrosocysteine modification. A phosphoserine mark is found at Ser140 and Ser144.

The protein belongs to the globin family. As to quaternary structure, heterotetramer of two alpha chains and two gamma chains in fetal hemoglobin (Hb F). As to expression, red blood cells.

Functionally, gamma chains make up the fetal hemoglobin F, in combination with alpha chains. The sequence is that of Hemoglobin subunit gamma-2 (HBG2) from Cebus albifrons (White-fronted capuchin).